The chain runs to 296 residues: MRTPVVMTLGMVLTPCGLLLNLVSTLAPGWRLVKGFLDQPVDVVLYQGLWDICREQSSRERECGQPDEWNYFQTQPVQVARGLMITSLATTALGLLLASLGVRCWQDEPHYGLAGLSGVVFFVAGLFSLIPVSWYNHFLSDPDVLAAPSSPVTVQVSYSLVLGYLGSCLLLLGGFSLALSFAPWCEERCRRCRKAPPAGPRRSSISTVYVDWPEPALTPAIKYYSDGQHRPPPTAEHRDTSKLKVGFPMPRPPPKSYTNPMDVLEGEEKKTATSQGGSSSRSTRPCQNSLPCDSDL.

The Cytoplasmic segment spans residues 1–2 (MR). A helical transmembrane segment spans residues 3 to 23 (TPVVMTLGMVLTPCGLLLNLV). At 24–81 (STLAPGWRLVKGFLDQPVDVVLYQGLWDICREQSSRERECGQPDEWNYFQTQPVQVAR) the chain is on the extracellular side. A helical transmembrane segment spans residues 82 to 102 (GLMITSLATTALGLLLASLGV). At 103–111 (RCWQDEPHY) the chain is on the cytoplasmic side. Residues 112 to 132 (GLAGLSGVVFFVAGLFSLIPV) traverse the membrane as a helical segment. Over 133–160 (SWYNHFLSDPDVLAAPSSPVTVQVSYSL) the chain is Extracellular. A helical membrane pass occupies residues 161–181 (VLGYLGSCLLLLGGFSLALSF). Residues 182–296 (APWCEERCRR…QNSLPCDSDL (115 aa)) are Cytoplasmic-facing. The disordered stretch occupies residues 224-296 (YSDGQHRPPP…QNSLPCDSDL (73 aa)). Residues 273–284 (TSQGGSSSRSTR) show a composition bias toward low complexity. A compositionally biased stretch (polar residues) spans 285–296 (PCQNSLPCDSDL).

The protein belongs to the claudin family.

It localises to the cell junction. Its subcellular location is the tight junction. It is found in the cell membrane. Functionally, plays a major role in tight junction-specific obliteration of the intercellular space, through calcium-independent cell-adhesion activity. The protein is Claudin-23 (Cldn23) of Mus musculus (Mouse).